Here is a 140-residue protein sequence, read N- to C-terminus: Nucleoside diphosphate kinase (140 aa).

ATP is bound by residues Lys-11, Phe-59, Arg-87, Thr-93, Arg-104, and Asn-114. His-117 functions as the Pros-phosphohistidine intermediate in the catalytic mechanism.

It belongs to the NDK family. In terms of assembly, homotetramer. The cofactor is Mg(2+).

The protein resides in the cytoplasm. It catalyses the reaction a 2'-deoxyribonucleoside 5'-diphosphate + ATP = a 2'-deoxyribonucleoside 5'-triphosphate + ADP. The catalysed reaction is a ribonucleoside 5'-diphosphate + ATP = a ribonucleoside 5'-triphosphate + ADP. Functionally, major role in the synthesis of nucleoside triphosphates other than ATP. The ATP gamma phosphate is transferred to the NDP beta phosphate via a ping-pong mechanism, using a phosphorylated active-site intermediate. This Chelativorans sp. (strain BNC1) protein is Nucleoside diphosphate kinase.